The primary structure comprises 140 residues: Putative transmembrane protein 49 (140 aa).

The next 2 membrane-spanning stretches (helical) occupy residues 23–43 and 93–110; these read LIMS…IGGV and IAVH…RYMY.

The protein resides in the host membrane. This chain is Putative transmembrane protein 49 (SIFV0049), found in Saccharolobus islandicus (Sulfolobus islandicus).